The following is a 103-amino-acid chain: Large ribosomal subunit protein bL21 (103 aa).

It belongs to the bacterial ribosomal protein bL21 family. In terms of assembly, part of the 50S ribosomal subunit. Contacts protein L20.

This protein binds to 23S rRNA in the presence of protein L20. This is Large ribosomal subunit protein bL21 from Pasteurella multocida (strain Pm70).